A 390-amino-acid chain; its full sequence is MNSPQEISILFFFIIFLDYVSAQSPPPPNLYATSDLFKPSLAIITGVFSIVFTLTFVLLVYAKCFHNDLRSETDSDGERIRHDRLWQGLFNRSSRFSGLDKKAIESLPFFRFSALKGLKQGLECSVCLSKFEDVEILRLLPKCRHAFHIGCIDQWLEQHATCPLCRNRVNIEDDLSVLGNSSTSLRILNQSETREEDSRLEIYIEREEGTNDGSSRFSSFRKILKKSLLLEREGNENIDEKKLMHKFNHRIVVSDAVFKNRWSNITSSDLTFLTSEMLNSVSSDRFSSVDRVHRGNLRDKEDMEMKRMLIKHKDSSRRTVSEITTVSREKAVGGSYRGSTASTSQNYAVTATTEERRRRLWLPIARRTAQWFVNREKSNDLNTTRQNLNV.

Residues 1–22 (MNSPQEISILFFFIIFLDYVSA) form the signal peptide. Residues 41–61 (LAIITGVFSIVFTLTFVLLVY) traverse the membrane as a helical segment. The segment at 124–166 (CSVCLSKFEDVEILRLLPKCRHAFHIGCIDQWLEQHATCPLCR) adopts an RING-type; atypical zinc-finger fold.

This sequence belongs to the RING-type zinc finger family. ATL subfamily.

The protein localises to the membrane. It carries out the reaction S-ubiquitinyl-[E2 ubiquitin-conjugating enzyme]-L-cysteine + [acceptor protein]-L-lysine = [E2 ubiquitin-conjugating enzyme]-L-cysteine + N(6)-ubiquitinyl-[acceptor protein]-L-lysine.. Its pathway is protein modification; protein ubiquitination. The protein is Putative RING-H2 finger protein ATL12 (ATL12) of Arabidopsis thaliana (Mouse-ear cress).